Here is a 116-residue protein sequence, read N- to C-terminus: Cation channel sperm-associated auxiliary subunit TMEM262 (116 aa).

At 1 to 16 (MRWRDRIAVLCFPPGL) the chain is on the cytoplasmic side. Residues 17–38 (MLTVAALILFFIHMGVFASDVH) traverse the membrane as a helical segment. Over 39–51 (NFCVIHNYDHMSF) the chain is Extracellular. Residues 52–72 (RYTVVLIFSQVISIGWAAMGS) form a helical membrane-spanning segment. Residues 73 to 84 (LYAEMTGDKFLR) lie on the Cytoplasmic side of the membrane. Residues 85–107 (CFALTILILNGAMFFNRLCLEFL) traverse the membrane as a helical segment. Topologically, residues 108–116 (AINYREERH) are extracellular.

In terms of assembly, component of the CatSper complex or CatSpermasome composed of the core pore-forming members CATSPER1, CATSPER2, CATSPER3 and CATSPER4 as well as auxiliary members CATSPERB, CATSPERG, CATSPERD, CATSPERE, CATSPERZ, C2CD6/CATSPERT, SLCO6C1, TMEM249, TMEM262 and EFCAB9. HSPA1 may be an additional auxiliary complex member. The core complex members CATSPER1, CATSPER2, CATSPER3 and CATSPER4 form a heterotetrameric channel. The auxiliary CATSPERB, CATSPERG2, CATSPERD and CATSPERE subunits form a pavilion-like structure over the pore which stabilizes the complex through interactions with CATSPER4, CATSPER3, CATSPER1 and CATSPER2 respectively. SLCO6C1 interacts with CATSPERE and TMEM262/CATSPERH interacts with CATSPERB, further stabilizing the complex. C2CD6/CATSPERT interacts at least with CATSPERD and is required for targeting the CatSper complex in the flagellar membrane.

The protein localises to the cell projection. The protein resides in the cilium. It localises to the flagellum membrane. In terms of biological role, auxiliary component of the CatSper complex, a complex involved in sperm cell hyperactivation. The sequence is that of Cation channel sperm-associated auxiliary subunit TMEM262 from Mus musculus (Mouse).